Reading from the N-terminus, the 562-residue chain is SLAIN motif-containing protein-like (562 aa).

3 disordered regions span residues glutamine 292–leucine 313, histidine 344–histidine 381, and serine 409–tyrosine 562. Composition is skewed to low complexity over residues alanine 295 to histidine 311 and arginine 345 to arginine 355. 4 stretches are compositionally biased toward polar residues: residues cysteine 356 to arginine 370, glutamine 424 to proline 442, valine 465 to proline 531, and serine 539 to glycine 553.

Belongs to the SLAIN motif-containing family.

This chain is SLAIN motif-containing protein-like, found in Xenopus laevis (African clawed frog).